Consider the following 146-residue polypeptide: Hemoglobin subunit beta (146 aa).

Valine 1 bears the N-acetylvaline mark. One can recognise a Globin domain in the interval 2-146; it reads HLSGEEKTAL…VANALAHKYH (145 aa). Phosphoserine is present on serine 44. An N6-acetyllysine modification is found at lysine 59. Histidine 63 contacts heme b. The residue at position 82 (lysine 82) is an N6-acetyllysine. Heme b is bound at residue histidine 92. Cysteine 93 carries the S-nitrosocysteine modification. An N6-acetyllysine modification is found at lysine 144.

It belongs to the globin family. As to quaternary structure, heterotetramer of two alpha chains and two beta chains. Red blood cells.

Its function is as follows. Involved in oxygen transport from the lung to the various peripheral tissues. The sequence is that of Hemoglobin subunit beta from Tamiasciurus hudsonicus (American red squirrel).